The following is a 484-amino-acid chain: Allantoinase, mitochondrial (484 aa).

Zn(2+)-binding residues include histidine 76, histidine 78, lysine 163, histidine 199, histidine 251, and aspartate 324. Residue lysine 163 is modified to N6-carboxylysine.

This sequence belongs to the metallo-dependent hydrolases superfamily. Allantoinase family. Homotetramer. It depends on Zn(2+) as a cofactor. In terms of processing, carboxylation allows a single lysine to coordinate two zinc ions. In terms of tissue distribution, liver and kidney.

Its subcellular location is the mitochondrion. The catalysed reaction is (S)-allantoin + H2O = allantoate + H(+). It participates in nitrogen metabolism; (S)-allantoin degradation; allantoate from (S)-allantoin: step 1/1. This chain is Allantoinase, mitochondrial (ALN), found in Aquarana catesbeiana (American bullfrog).